A 212-amino-acid chain; its full sequence is Sclerostin (212 aa).

Positions 1–23 are cleaved as a signal peptide; it reads MQLSLALCLVCLLVHAAFRVVEG. N-linked (GlcNAc...) asparagine glycosylation occurs at asparagine 52. Disulfide bonds link cysteine 79–cysteine 133, cysteine 93–cysteine 147, cysteine 104–cysteine 164, and cysteine 108–cysteine 166. The CTCK domain occupies 81-171; it reads ELHFTRYVTD…ASCKCKRLTR (91 aa). Asparagine 174 carries an N-linked (GlcNAc...) asparagine glycan. Residues 179–212 form a disordered region; the sequence is KDFGPEAARPQTGRKLRPRARGTKASRAELENAY. The span at 190–202 shows a compositional bias: basic residues; sequence TGRKLRPRARGTK.

It belongs to the sclerostin family. As to quaternary structure, interacts with LRP4 (via the extracellular domain); the interaction facilitates the inhibition of Wnt signaling. Interacts with LRP5 (via the first two YWTD-EGF repeat domains); the interaction inhibits Wnt-mediated signaling. Interacts with LRP6.

The protein resides in the secreted. It is found in the extracellular space. Its subcellular location is the extracellular matrix. In terms of biological role, negative regulator of bone growth that acts through inhibition of Wnt signaling and bone formation. In Bos taurus (Bovine), this protein is Sclerostin.